Consider the following 86-residue polypeptide: Serine protease inhibitor Kazal-type 9 (86 aa).

A signal peptide spans 1–19 (MRATAIVLLLALTLATMFS). The region spanning 26 to 86 (TKQMVDCSHY…TLKFVHFGKC (61 aa)) is the Kazal-like domain. Intrachain disulfides connect Cys-32–Cys-68, Cys-46–Cys-65, and Cys-54–Cys-86.

In terms of assembly, dimer. Interacts with KLK5 and KLK8. Skin. Highly expressed at sites of hyperkeratosis. Also detected in thymus, tonsils, testis, pancreas, liver, placenta and brain. Expressed at stratum granulosum and stratum corneum at palmar and plantar sites (at protein level).

The protein resides in the secreted. In terms of biological role, serine protease inhibitor which specifically inhibits KLK5. May contribute to the regulation of the desquamation process in skin by inhibiting KLK5. The protein is Serine protease inhibitor Kazal-type 9 (SPINK9) of Homo sapiens (Human).